The following is a 740-amino-acid chain: Ribosomal protein S6 kinase alpha-6 (740 aa).

The 260-residue stretch at F67–F326 folds into the Protein kinase 1 domain. ATP is bound by residues L73 to V81 and K99. Catalysis depends on D192, which acts as the Proton acceptor. Positions S327–K396 constitute an AGC-kinase C-terminal domain. In terms of domain architecture, Protein kinase 2 spans Y420 to I677. Residues I426–C434 and K449 each bind ATP. The Proton acceptor role is filled by D537.

It belongs to the protein kinase superfamily. AGC Ser/Thr protein kinase family. S6 kinase subfamily. In terms of assembly, forms a complex with either ERK1 or ERK2 in quiescent cells. Transiently dissociates following mitogenic stimulation. It depends on Mg(2+) as a cofactor.

It catalyses the reaction L-seryl-[protein] + ATP = O-phospho-L-seryl-[protein] + ADP + H(+). It carries out the reaction L-threonyl-[protein] + ATP = O-phospho-L-threonyl-[protein] + ADP + H(+). Its activity is regulated as follows. Activated by multiple phosphorylations on threonine and serine residues. Functionally, serine/threonine kinase that may play a role in mediating the growth-factor and stress induced activation of the transcription factor CREB. The sequence is that of Ribosomal protein S6 kinase alpha-6 (rps6ka6) from Danio rerio (Zebrafish).